The chain runs to 508 residues: Photosystem II CP47 reaction center protein (508 aa).

6 consecutive transmembrane segments (helical) span residues 21–36 (AVHI…WAGS), 101–115 (IILS…IWHW), 140–156 (GIHL…FGAF), 203–218 (IAAG…FHLS), 237–252 (VLSS…AFVV), and 457–472 (NFAL…HGGR).

The protein belongs to the PsbB/PsbC family. PsbB subfamily. PSII is composed of 1 copy each of membrane proteins PsbA, PsbB, PsbC, PsbD, PsbE, PsbF, PsbH, PsbI, PsbJ, PsbK, PsbL, PsbM, PsbT, PsbX, PsbY, PsbZ, Psb30/Ycf12, at least 3 peripheral proteins of the oxygen-evolving complex and a large number of cofactors. It forms dimeric complexes. Binds multiple chlorophylls. PSII binds additional chlorophylls, carotenoids and specific lipids. is required as a cofactor.

It localises to the plastid. The protein resides in the chloroplast thylakoid membrane. One of the components of the core complex of photosystem II (PSII). It binds chlorophyll and helps catalyze the primary light-induced photochemical processes of PSII. PSII is a light-driven water:plastoquinone oxidoreductase, using light energy to abstract electrons from H(2)O, generating O(2) and a proton gradient subsequently used for ATP formation. The protein is Photosystem II CP47 reaction center protein of Chaetosphaeridium globosum (Charophycean green alga).